The following is a 585-amino-acid chain: YTH domain-containing family protein 3 (585 aa).

Disordered stretches follow at residues 1–52 (MSAT…YPPM), 243–277 (RKPA…MNIG), and 304–351 (PQPL…QQLQ). Position 2 is an N-acetylserine (S2). Polar residues predominate over residues 15–24 (NKVSVQNGSI). S23 bears the Phosphoserine mark. Over residues 244–254 (KPAKPQPKLKP) the composition is skewed to basic residues. Positions 329-351 (QQQQGPQPQAQPHQVQPQQQQLQ) are enriched in low complexity. A YTH domain is found at 416–550 (GRVFIIKSYS…EKAKQVLKII (135 aa)). RNA contacts are provided by residues 422–424 (KSY), D428, 438–439 (WC), N468, W492, and W497.

It belongs to the YTHDF family. YTHDF3 subfamily. As to quaternary structure, interacts with CNOT1; promoting recruitment of the CCR4-NOT complex. Interacts with YTHDF1. Interacts with YTHDF2. Interacts with PAN3. Post-translationally, (Microbial infection) Proteolytically cleaved by HIV-1 protease when incorporated into HIV-1 particles in a nucleocapsid-dependent-manner. Cleavage by HIV-1 protease probably ensures optimal infectivity of the mature virion.

It is found in the cytoplasm. The protein localises to the cytosol. Its subcellular location is the P-body. It localises to the stress granule. Specifically recognizes and binds N6-methyladenosine (m6A)-containing RNAs, and regulates their stability. M6A is a modification present at internal sites of mRNAs and some non-coding RNAs and plays a role in mRNA stability and processing. Acts as a regulator of mRNA stability by promoting degradation of m6A-containing mRNAs via interaction with the CCR4-NOT complex or PAN3. The YTHDF paralogs (YTHDF1, YTHDF2 and YTHDF3) share m6A-containing mRNAs targets and act redundantly to mediate mRNA degradation and cellular differentiation. Acts as a negative regulator of type I interferon response by down-regulating interferon-stimulated genes (ISGs) expression: acts by binding to FOXO3 mRNAs. Binds to FOXO3 mRNAs independently of METTL3-mediated m6A modification. Can also act as a regulator of mRNA stability in cooperation with YTHDF2 by binding to m6A-containing mRNA and promoting their degradation. Recognizes and binds m6A-containing circular RNAs (circRNAs); circRNAs are generated through back-splicing of pre-mRNAs, a non-canonical splicing process promoted by dsRNA structures across circularizing exons. Promotes formation of phase-separated membraneless compartments, such as P-bodies or stress granules, by undergoing liquid-liquid phase separation upon binding to mRNAs containing multiple m6A-modified residues: polymethylated mRNAs act as a multivalent scaffold for the binding of YTHDF proteins, juxtaposing their disordered regions and thereby leading to phase separation. The resulting mRNA-YTHDF complexes then partition into different endogenous phase-separated membraneless compartments, such as P-bodies, stress granules or neuronal RNA granules. May also recognize and bind N1-methyladenosine (m1A)-containing mRNAs: inhibits trophoblast invasion by binding to m1A-methylated transcripts of IGF1R, promoting their degradation. Its function is as follows. Has some antiviral activity against HIV-1 virus: incorporated into HIV-1 particles in a nucleocapsid-dependent manner and reduces viral infectivity in the next cycle of infection. May interfere with this early step of the viral life cycle by binding to N6-methyladenosine (m6A) modified sites on the HIV-1 RNA genome. The chain is YTH domain-containing family protein 3 from Homo sapiens (Human).